The following is a 35-amino-acid chain: U1-theraphotoxin-Hs1f (35 aa).

Cystine bridges form between Cys-3–Cys-16, Cys-7–Cys-27, and Cys-21–Cys-32.

This sequence belongs to the neurotoxin 12 (Hwtx-2) family. 02 (Hwtx-2) subfamily. Expressed by the venom gland.

Its subcellular location is the secreted. In terms of biological role, blocks neuromuscular transmission. Acts cooperatively to potentiate the activity of huwentoxin-I. Paralyzes locusts and kills mice following intracerebroventricular injection. The chain is U1-theraphotoxin-Hs1f from Cyriopagopus schmidti (Chinese bird spider).